The chain runs to 643 residues: uncharacterized protein (643 aa).

Residues 179–199 (FKSSQLQQSPSPNKKSPSYSQ) show a composition bias toward low complexity. 2 disordered regions span residues 179–200 (FKSSQLQQSPSPNKKSPSYSQV) and 349–377 (KRSNSIDRAGIRSRRRSHSSPERSTSTEN).

This is an uncharacterized protein from Caenorhabditis elegans.